Consider the following 246-residue polypeptide: MRAQSCSLFLEMKCREEFVLSKGPGVEKMFDAIAGRYDLMNKVMTMGQDQRWRRFVVAKAGDPGAGQVLDLATGTGDIAALMHRSYPRAQVTGGDFSRNMLEEAKKRFAGQGIDWQVCDANKLPFADNTFEAVTFGYLLRNVDDASSVLAEVYRVLKPGGRCVCLDTTPPAKNIIYPFVQFYFRYGIPLLGRMIAADEAAYAYLSGSTMEFHSAEVLADLFRGAGFVDVHYKKFMLGTIGIHWGVK.

S-adenosyl-L-methionine-binding positions include Thr-75, Asp-95, and 119-120; that span reads DA.

This sequence belongs to the class I-like SAM-binding methyltransferase superfamily. MenG/UbiE family.

The enzyme catalyses a 2-demethylmenaquinol + S-adenosyl-L-methionine = a menaquinol + S-adenosyl-L-homocysteine + H(+). It carries out the reaction a 2-methoxy-6-(all-trans-polyprenyl)benzene-1,4-diol + S-adenosyl-L-methionine = a 5-methoxy-2-methyl-3-(all-trans-polyprenyl)benzene-1,4-diol + S-adenosyl-L-homocysteine + H(+). The protein operates within quinol/quinone metabolism; menaquinone biosynthesis; menaquinol from 1,4-dihydroxy-2-naphthoate: step 2/2. Its pathway is cofactor biosynthesis; ubiquinone biosynthesis. Functionally, methyltransferase required for the conversion of demethylmenaquinol (DMKH2) to menaquinol (MKH2) and the conversion of 2-polyprenyl-6-methoxy-1,4-benzoquinol (DDMQH2) to 2-polyprenyl-3-methyl-6-methoxy-1,4-benzoquinol (DMQH2). In Desulfotalea psychrophila (strain LSv54 / DSM 12343), this protein is Ubiquinone/menaquinone biosynthesis C-methyltransferase UbiE.